Here is a 1209-residue protein sequence, read N- to C-terminus: Major DNA-binding protein (1209 aa).

The disordered stretch occupies residues 290 to 312 (NAGKGSGRAQRQGDGSGSKNSAS). A zinc finger spans residues 503-516 (CGLCNQATRPACAH). The Required for filament formation motif lies at 849-850 (FW). Positions 1182-1209 (QKRSLPDDILFDMGAPPEKKSGLTFDML) are required for nuclear localization.

The protein belongs to the herpesviridae major DNA-binding protein family. As to quaternary structure, homooligomers. Forms double-helical filaments necessary for the formation of replication compartments within the host nucleus. Interacts with the origin-binding protein. Interacts with the helicase primase complex; this interaction stimulates primer synthesis activity of the helicase-primase complex. Interacts with the DNA polymerase. Interacts with the alkaline exonuclease; this interaction increases its nuclease processivity.

It is found in the host nucleus. Plays several crucial roles in viral infection. Participates in the opening of the viral DNA origin to initiate replication by interacting with the origin-binding protein. May disrupt loops, hairpins and other secondary structures present on ssDNA to reduce and eliminate pausing of viral DNA polymerase at specific sites during elongation. Promotes viral DNA recombination by performing strand-transfer, characterized by the ability to transfer a DNA strand from a linear duplex to a complementary single-stranded DNA circle. Can also catalyze the renaturation of complementary single strands. Additionally, reorganizes the host cell nucleus, leading to the formation of prereplicative sites and replication compartments. This process is driven by the protein which can form double-helical filaments in the absence of DNA. This Equine herpesvirus 1 (strain Ab4p) (EHV-1) protein is Major DNA-binding protein.